Consider the following 349-residue polypeptide: MSDIFFNPIWDVRMTDTSLRDGSHHKRHQFTGEEVRSIVAALDAAGVPVIEVTHGDGLGGSSFNYGFSKTPEQELIKIAAETAKESKIAFLMLPGVGTKEDIKEAQNNGGSICRIATHCTEADVSIQHFGLARELGLETVGFLMMAHTISPEKLAQQARIMADAGCQCVYVVDSAGALVLEGVRDRVQALVAELGSDAQVGFHGHENLGLGVANSVEAVRAGAKQIDGSCRRFGAGAGNAPVEALIGVFDKIGVKTGIDFFDIADAAEEVVAPAMPAECLLDRNALIMGYSGVYSSFLKHAIRQSERYGVPAHQLLHRAGQRKLIGGQEDQLIDIALEIKREQEAAASK.

A Pyruvate carboxyltransferase domain is found at 12–264; it reads VRMTDTSLRD…KTGIDFFDIA (253 aa). 20 to 21 is a binding site for substrate; it reads RD. Residue Asp21 coordinates Mn(2+). The active-site Proton acceptor is His24. Residues Ser174 and His203 each coordinate substrate. Mn(2+) is bound by residues His203 and His205. Residue Tyr294 participates in substrate binding.

This sequence belongs to the 4-hydroxy-2-oxovalerate aldolase family.

The enzyme catalyses (S)-4-hydroxy-2-oxopentanoate = acetaldehyde + pyruvate. This Mycolicibacterium smegmatis (strain ATCC 700084 / mc(2)155) (Mycobacterium smegmatis) protein is 4-hydroxy-2-oxovalerate aldolase 2 (bphI-2).